A 152-amino-acid polypeptide reads, in one-letter code: Homeobox protein ceh-63 (152 aa).

Residues 21–30 are compositionally biased toward polar residues; that stretch reads NDTNSSQQIK. Disordered stretches follow at residues 21–48 and 92–126; these read NDTN…RTTF and RRTK…SQHV. The span at 35–44 shows a compositional bias: basic residues; the sequence is PPKRSNRPTK. A DNA-binding region (homeobox) is located at residues 41-100; the sequence is RPTKRTTFTSEQVTLLELEFAKNEYICKDRRGELAQTIELTECQVKTWFQNRRTKKRRCT. The span at 116–126 shows a compositional bias: polar residues; that stretch reads PSPQNPSSQHV.

May interact with homeobox protein ceh-14.

Its subcellular location is the nucleus. Functionally, probable transcription factor, modulating expression of helix-loop-helix protein mbr-1, perhaps acting in concert with homeobox protein ceh-14. May play a minor role in axon guidance in the DVC interneuron. This Caenorhabditis elegans protein is Homeobox protein ceh-63.